Reading from the N-terminus, the 470-residue chain is Monocarboxylate transporter 4 (470 aa).

The Cytoplasmic portion of the chain corresponds to 1-17 (MGGAVVDEGPTGIKAPD). The helical transmembrane segment at 18–38 (GGWGWAVLFGCFIITGFSYAF) threads the bilayer. At 39–61 (PKAVSVFFKELMHEFGIGYSDTA) the chain is on the extracellular side. A helical transmembrane segment spans residues 62–82 (WISSILLAMLYGTGPLCSVCV). The Cytoplasmic segment spans residues 83–84 (NR). A helical transmembrane segment spans residues 85–105 (FGCRPVMLVGGLFASLGMVAA). Over 106–109 (SFCR) the chain is Extracellular. Residues 110–130 (SIIQIYLTTGVITGLGLALNF) form a helical membrane-spanning segment. Residues 131 to 149 (QPSLIMLNRYFNKRRPIAN) are Cytoplasmic-facing. Residues 150 to 170 (GLAAAGSPVFLCALSPLGQLL) form a helical membrane-spanning segment. The Extracellular segment spans residues 171–179 (QDHYGWRGG). The chain crosses the membrane as a helical span at residues 180 to 200 (FLILGGLLLNCCVCAALMRPL). Over 201–231 (VAPQVGGGTEPRGPQRPPQRLLDLSVFRDRG) the chain is Cytoplasmic. The helical transmembrane segment at 232 to 252 (FLIYAVAASIMVLGLFVPPVF) threads the bilayer. Topologically, residues 253–267 (VVSYAKDMGVPDTKA) are extracellular. The helical transmembrane segment at 268–288 (AFLLTILGFIDIFARPTAGFI) threads the bilayer. The Cytoplasmic portion of the chain corresponds to 289–298 (TGLKKVRPYS). Residues 299 to 319 (VYLFSFAMFFNGFTDLTGSTA) form a helical membrane-spanning segment. The Extracellular portion of the chain corresponds to 320-321 (TD). Residues 322-342 (YGGLVVFCIFFGISYGMVGAL) form a helical membrane-spanning segment. At 343–355 (QFEVLMAIVGTQK) the chain is on the cytoplasmic side. Residues 356 to 376 (FSSAIGLVLLLEAVAVLIGPP) form a helical membrane-spanning segment. Over 377 to 391 (SGGKLLDATKVYKYV) the chain is Extracellular. Residues 392–412 (FILAGAEVLTSSLVLLLGNFF) form a helical membrane-spanning segment. Topologically, residues 413–470 (CIGKRKRPEVTEPEEVASEEKLHKPPVDVGVDSREVEHFLKAEPEKNGEVVHTPETSV) are cytoplasmic. Basolateral sorting signal regions lie at residues 429–446 (ASEEKLHKPPVDVGVDSR) and 446–470 (REVEHFLKAEPEKNGEVVHTPETSV). Position 430 is a phosphoserine (Ser-430). Thr-465 carries the post-translational modification Phosphothreonine. Ser-469 is subject to Phosphoserine.

Belongs to the major facilitator superfamily. Monocarboxylate porter (TC 2.A.1.13) family. In terms of assembly, interacts with BSG; interaction mediates SLC16A3 targeting to the plasma membrane.

Its subcellular location is the cell membrane. The protein resides in the basolateral cell membrane. The catalysed reaction is (S)-lactate(in) + H(+)(in) = (S)-lactate(out) + H(+)(out). It carries out the reaction pyruvate(out) + H(+)(out) = pyruvate(in) + H(+)(in). Its function is as follows. Proton-dependent transporter of monocarboxylates such as L-lactate and pyruvate. Plays a predominant role in the L-lactate efflux from highly glycolytic cells. This Mus musculus (Mouse) protein is Monocarboxylate transporter 4 (Slc16a3).